The following is a 310-amino-acid chain: 3,5-dioxohexanoate:acetyl-CoA acetone transferase (310 aa).

Zn(2+) is bound by residues His-49, His-51, and Glu-258.

This sequence belongs to the BKACE family. Zn(2+) serves as cofactor.

The catalysed reaction is 3,5-dioxohexanoate + acetyl-CoA = acetoacetyl-CoA + acetoacetate. In terms of biological role, catalyzes the condensation of 3,5-dioxohexanoate and acetyl-CoA, forming acetoacetate and acetoacetyl-CoA. May be involved in fatty acid biosynthesis rescue via triacetic acid lactone. This is 3,5-dioxohexanoate:acetyl-CoA acetone transferase from Paraburkholderia graminis (strain ATCC 700544 / DSM 17151 / LMG 18924 / NCIMB 13744 / C4D1M).